A 490-amino-acid polypeptide reads, in one-letter code: Alpha-galactosidase (490 aa).

Residue 4 to 70 coordinates NAD(+); the sequence is FKIAIIGAGS…LPTRVTATTD (67 aa). N150 is a substrate binding site. C171 serves as a coordination point for Mn(2+). H172 (proton donor) is an active-site residue. H201 serves as a coordination point for Mn(2+). Y258 serves as the catalytic Proton acceptor.

It belongs to the glycosyl hydrolase 4 family. In terms of assembly, homodimer. Requires Mn(2+) as cofactor. NAD(+) serves as cofactor.

It carries out the reaction Hydrolysis of terminal, non-reducing alpha-D-galactose residues in alpha-D-galactosides, including galactose oligosaccharides, galactomannans and galactolipids.. The polypeptide is Alpha-galactosidase (melA) (Rhizobium meliloti (strain 1021) (Ensifer meliloti)).